A 114-amino-acid polypeptide reads, in one-letter code: Large ribosomal subunit protein bL20 (114 aa).

Belongs to the bacterial ribosomal protein bL20 family.

Functionally, binds directly to 23S ribosomal RNA and is necessary for the in vitro assembly process of the 50S ribosomal subunit. It is not involved in the protein synthesizing functions of that subunit. In Flavobacterium johnsoniae (strain ATCC 17061 / DSM 2064 / JCM 8514 / BCRC 14874 / CCUG 350202 / NBRC 14942 / NCIMB 11054 / UW101) (Cytophaga johnsonae), this protein is Large ribosomal subunit protein bL20.